A 123-amino-acid polypeptide reads, in one-letter code: Small ribosomal subunit protein uS12 (123 aa).

D89 carries the post-translational modification 3-methylthioaspartic acid.

This sequence belongs to the universal ribosomal protein uS12 family. Part of the 30S ribosomal subunit. Contacts proteins S8 and S17. May interact with IF1 in the 30S initiation complex.

With S4 and S5 plays an important role in translational accuracy. Its function is as follows. Interacts with and stabilizes bases of the 16S rRNA that are involved in tRNA selection in the A site and with the mRNA backbone. Located at the interface of the 30S and 50S subunits, it traverses the body of the 30S subunit contacting proteins on the other side and probably holding the rRNA structure together. The combined cluster of proteins S8, S12 and S17 appears to hold together the shoulder and platform of the 30S subunit. This is Small ribosomal subunit protein uS12 from Citrifermentans bemidjiense (strain ATCC BAA-1014 / DSM 16622 / JCM 12645 / Bem) (Geobacter bemidjiensis).